Reading from the N-terminus, the 145-residue chain is Phospholipase A2 (145 aa).

The signal sequence occupies residues 1–15; that stretch reads MRLLVLAALLTVGAG. Gln-16 carries the post-translational modification Pyrrolidone carboxylic acid. The propeptide at 16–22 is removed by trypsin; that stretch reads QAGLNSR. Disulfide bonds link Cys-33–Cys-99, Cys-49–Cys-145, Cys-51–Cys-67, Cys-66–Cys-127, Cys-73–Cys-120, Cys-83–Cys-113, and Cys-106–Cys-118. Ca(2+)-binding residues include Tyr-50, Gly-52, and Gly-54. His-70 is an active-site residue. Asp-71 contacts Ca(2+). Residue Asp-121 is part of the active site.

The protein belongs to the phospholipase A2 family. In terms of assembly, monomer or homodimer. The cofactor is Ca(2+). Post-translationally, activated by trypsin cleavage in the duodenum. Can also be activated by thrombin or autocatalytically.

It is found in the secreted. The catalysed reaction is a 1,2-diacyl-sn-glycero-3-phosphocholine + H2O = a 1-acyl-sn-glycero-3-phosphocholine + a fatty acid + H(+). It carries out the reaction 1,2-ditetradecanoyl-sn-glycero-3-phosphocholine + H2O = 1-tetradecanoyl-sn-glycero-3-phosphocholine + tetradecanoate + H(+). The enzyme catalyses 1,2-dihexadecanoyl-sn-glycero-3-phosphocholine + H2O = 1-hexadecanoyl-sn-glycero-3-phosphocholine + hexadecanoate + H(+). It catalyses the reaction 1-hexadecanoyl-2-(9Z-octadecenoyl)-sn-glycero-3-phosphocholine + H2O = 1-hexadecanoyl-sn-glycero-3-phosphocholine + (9Z)-octadecenoate + H(+). The catalysed reaction is 1-hexadecanoyl-2-(5Z,8Z,11Z,14Z-eicosatetraenoyl)-sn-glycero-3-phosphocholine + H2O = 1-hexadecanoyl-sn-glycero-3-phosphocholine + (5Z,8Z,11Z,14Z)-eicosatetraenoate + H(+). It carries out the reaction 1-hexadecanoyl-2-(9Z-octadecenoyl)-sn-glycero-3-phospho-(1'-sn-glycerol) + H2O = 1-hexadecanoyl-sn-glycero-3-phospho-(1'-sn-glycerol) + (9Z)-octadecenoate + H(+). The enzyme catalyses N-hexadecanoyl-1,2-di-(9Z-octadecenoyl)-sn-glycero-3-phosphoethanolamine + H2O = N-hexadecanoyl-1-(9Z-octadecenoyl)-sn-glycero-3-phosphoethanolamine + (9Z)-octadecenoate + H(+). It catalyses the reaction 1-hexadecanoyl-2-(9Z,12Z-octadecadienoyl)-sn-glycero-3-phosphoethanolamine + H2O = 1-hexadecanoyl-sn-glycero-3-phosphoethanolamine + (9Z,12Z)-octadecadienoate + H(+). The catalysed reaction is N,1-dihexadecanoyl-2-(9Z,12Z-octadecadienoyl)-sn-glycero-3-phosphoethanolamine + H2O = N,1-dihexadecanoyl-sn-glycero-3-phosphoethanolamine + (9Z,12Z)-octadecadienoate + H(+). Functionally, secretory calcium-dependent phospholipase A2 that primarily targets dietary phospholipids in the intestinal tract. Hydrolyzes the ester bond of the fatty acyl group attached at sn-2 position of phospholipids (phospholipase A2 activity) with preference for phosphatidylethanolamines and phosphatidylglycerols over phosphatidylcholines. May play a role in the biosynthesis of N-acyl ethanolamines that regulate energy metabolism and inflammation in the intestinal tract. Hydrolyzes N-acyl phosphatidylethanolamines to N-acyl lysophosphatidylethanolamines, which are further cleaved by a lysophospholipase D to release N-acyl ethanolamines. May act in an autocrine and paracrine manner. Has anti-helminth activity in a process regulated by gut microbiota. Upon helminth infection of intestinal epithelia, directly affects phosphatidylethanolamine contents in the membrane of helminth larvae, likely controlling an array of phospholipid-mediated cellular processes such as membrane fusion and cell division while providing for better immune recognition, ultimately reducing larvae integrity and infectivity. The chain is Phospholipase A2 (PLA2G1B) from Bos taurus (Bovine).